The sequence spans 445 residues: Anaerobilin synthase (445 aa).

The Radical SAM core domain maps to 52–287 (TASPRKRLVY…LQGCDFMDDA (236 aa)). Residue Tyr-61 coordinates S-adenosyl-L-methionine. Cys-67 and Cys-71 together coordinate [4Fe-4S] cluster. Residue Phe-73 participates in S-adenosyl-L-methionine binding. Position 74 (Cys-74) interacts with [4Fe-4S] cluster. S-adenosyl-L-methionine is bound by residues Gly-118, 119–120 (GT), Glu-151, Gln-178, Arg-190, and Asp-215.

This sequence belongs to the anaerobic coproporphyrinogen-III oxidase family. ChuW/HutW subfamily. [4Fe-4S] cluster serves as cofactor.

The enzyme catalyses 2 reduced [flavodoxin] + heme b + 2 S-adenosyl-L-methionine = anaerobilin + 2 oxidized [flavodoxin] + Fe(2+) + 5'-deoxyadenosine + L-methionine + S-adenosyl-L-homocysteine. Its activity is regulated as follows. Inhibited by exposure to molecular oxygen. Involved in heme degradation and iron utilization under anaerobic conditions. Catalyzes a radical-mediated mechanism facilitating iron liberation and the production of the tetrapyrrole product anaerobilin. Can use heme, mesoheme and deuteroheme as substrates. The chain is Anaerobilin synthase from Escherichia coli O157:H7.